We begin with the raw amino-acid sequence, 324 residues long: Beta-ketoacyl-[acyl-carrier-protein] synthase III (324 aa).

Catalysis depends on residues Cys-112 and His-249. The interval 250–254 is ACP-binding; it reads QANRR. Residue Asn-279 is part of the active site.

Belongs to the thiolase-like superfamily. FabH family. As to quaternary structure, homodimer.

Its subcellular location is the cytoplasm. The catalysed reaction is malonyl-[ACP] + acetyl-CoA + H(+) = 3-oxobutanoyl-[ACP] + CO2 + CoA. It participates in lipid metabolism; fatty acid biosynthesis. In terms of biological role, catalyzes the condensation reaction of fatty acid synthesis by the addition to an acyl acceptor of two carbons from malonyl-ACP. Catalyzes the first condensation reaction which initiates fatty acid synthesis and may therefore play a role in governing the total rate of fatty acid production. Possesses both acetoacetyl-ACP synthase and acetyl transacylase activities. Its substrate specificity determines the biosynthesis of branched-chain and/or straight-chain of fatty acids. This Streptococcus pyogenes serotype M2 (strain MGAS10270) protein is Beta-ketoacyl-[acyl-carrier-protein] synthase III.